Reading from the N-terminus, the 221-residue chain is Cutinase 3 (221 aa).

The signal sequence occupies residues 1–17 (MRFHTILLAALASLVIA). 2 cysteine pairs are disulfide-bonded: cysteine 44/cysteine 122 and cysteine 70/cysteine 84. Catalysis depends on serine 133, which acts as the Nucleophile. Cysteine 184 and cysteine 191 are disulfide-bonded. Aspartate 188 is a catalytic residue. The active-site Proton donor/acceptor is histidine 201.

This sequence belongs to the cutinase family.

The protein resides in the secreted. The enzyme catalyses cutin + H2O = cutin monomers.. Functionally, catalyzes the hydrolysis of complex carboxylic polyesters found in the cell wall of plants. Degrades cutin, a macromolecule that forms the structure of the plant cuticle. Also degrades suberin, a specialized macromolecule found in the cell wall of various plant tissues. This is Cutinase 3 from Emericella nidulans (strain FGSC A4 / ATCC 38163 / CBS 112.46 / NRRL 194 / M139) (Aspergillus nidulans).